A 135-amino-acid chain; its full sequence is Large-conductance mechanosensitive channel (135 aa).

The next 2 membrane-spanning stretches (helical) occupy residues 10-30 and 76-96; these read FAMRGNVVDLAVGVIIGAAFG and GVFIQNVFDFVIVAFAIFLAI.

It belongs to the MscL family. Homopentamer.

Its subcellular location is the cell inner membrane. In terms of biological role, channel that opens in response to stretch forces in the membrane lipid bilayer. May participate in the regulation of osmotic pressure changes within the cell. The protein is Large-conductance mechanosensitive channel of Cronobacter sakazakii (strain ATCC BAA-894) (Enterobacter sakazakii).